Consider the following 307-residue polypeptide: Recombination-associated protein RdgC (307 aa).

It belongs to the RdgC family.

The protein resides in the cytoplasm. It is found in the nucleoid. In terms of biological role, may be involved in recombination. The polypeptide is Recombination-associated protein RdgC (Burkholderia cenocepacia (strain ATCC BAA-245 / DSM 16553 / LMG 16656 / NCTC 13227 / J2315 / CF5610) (Burkholderia cepacia (strain J2315))).